The following is a 637-amino-acid chain: Extracellular metalloproteinase 2 (637 aa).

An N-terminal signal peptide occupies residues M1–A20. A propeptide spanning residues H21–D244 is cleaved from the precursor. Residues N302, N328, N337, and N413 are each glycosylated (N-linked (GlcNAc...) asparagine). H430 contacts Zn(2+). Residue E431 is part of the active site. Zn(2+) is bound at residue H434.

Belongs to the peptidase M36 family. Zn(2+) serves as cofactor.

The protein localises to the secreted. Functionally, secreted metalloproteinase that allows assimilation of proteinaceous substrates. The chain is Extracellular metalloproteinase 2 (MEP2) from Phaeosphaeria nodorum (strain SN15 / ATCC MYA-4574 / FGSC 10173) (Glume blotch fungus).